Reading from the N-terminus, the 160-residue chain is MAAFRPPQFKKSKILAENRRARYEYAFEDFYEAGLALTGTEVKSLRFGQGSIAESYAEVKNGEVTLINANIPEFSHGNRFNHEPKRPRKLLLHEREIRKMQTAVSREGMTVIPVSLYFNNKGKAKLELAIARGKKTHDKRATIKERDWKRDQARLLRDKG.

This sequence belongs to the SmpB family.

It localises to the cytoplasm. In terms of biological role, required for rescue of stalled ribosomes mediated by trans-translation. Binds to transfer-messenger RNA (tmRNA), required for stable association of tmRNA with ribosomes. tmRNA and SmpB together mimic tRNA shape, replacing the anticodon stem-loop with SmpB. tmRNA is encoded by the ssrA gene; the 2 termini fold to resemble tRNA(Ala) and it encodes a 'tag peptide', a short internal open reading frame. During trans-translation Ala-aminoacylated tmRNA acts like a tRNA, entering the A-site of stalled ribosomes, displacing the stalled mRNA. The ribosome then switches to translate the ORF on the tmRNA; the nascent peptide is terminated with the 'tag peptide' encoded by the tmRNA and targeted for degradation. The ribosome is freed to recommence translation, which seems to be the essential function of trans-translation. In Zymomonas mobilis subsp. mobilis (strain ATCC 31821 / ZM4 / CP4), this protein is SsrA-binding protein.